A 246-amino-acid chain; its full sequence is Transcriptional regulatory protein LytR (246 aa).

Residues 2–116 form the Response regulatory domain; sequence KALIIDDEPL…RIEQAVNKVR (115 aa). Asp-53 is modified (4-aspartylphosphate). In terms of domain architecture, HTH LytTR-type spans 141-245; sequence LPVEIDDKIH…MKDFKASIGL (105 aa).

As to quaternary structure, homodimer; when phosphorylated. Phosphorylated and dephosphorylated by LytS.

The protein resides in the cytoplasm. In terms of biological role, member of the two-component regulatory system LytR/LytS that regulates genes involved in autolysis, programmed cell death, biofilm formation and cell wall metabolism. Also participates in sensing and responding to host defense cationic antimicrobial peptides (HDPs). Upon phosphorylation by LytS, functions as a transcription regulator by direct binding to promoter regions of target genes including lrgA and lrgB, to positively regulate their expression. The sequence is that of Transcriptional regulatory protein LytR (lytR) from Staphylococcus aureus (strain bovine RF122 / ET3-1).